Here is a 353-residue protein sequence, read N- to C-terminus: Phospho-N-acetylmuramoyl-pentapeptide-transferase (353 aa).

The next 10 helical transmembrane spans lie at 22-42, 65-85, 88-108, 129-149, 161-181, 192-212, 228-248, 256-276, 281-301, and 330-350; these read FAFFIALCLSLFLMPKFITWA, TPTMGGLIFISSAVIASLFCI, DNIFAISALLCLILFCLIGLI, LLAQIIAGLICILPLYFSSEL, PLFDMEIFAIAFWILVLISSS, GLATVPSIFSLSTLGIFLYLS, GLGEVVIICAALIGALMGFLW, VFMGDSGSLALGGFIGFLAII, ILLLLIGFVFVLETVSVILQV, and KIIVRFWMIALLSNLLALASI.

Belongs to the glycosyltransferase 4 family. MraY subfamily. It depends on Mg(2+) as a cofactor.

It is found in the cell inner membrane. It carries out the reaction UDP-N-acetyl-alpha-D-muramoyl-L-alanyl-gamma-D-glutamyl-meso-2,6-diaminopimeloyl-D-alanyl-D-alanine + di-trans,octa-cis-undecaprenyl phosphate = di-trans,octa-cis-undecaprenyl diphospho-N-acetyl-alpha-D-muramoyl-L-alanyl-D-glutamyl-meso-2,6-diaminopimeloyl-D-alanyl-D-alanine + UMP. It participates in cell wall biogenesis; peptidoglycan biosynthesis. Its function is as follows. Catalyzes the initial step of the lipid cycle reactions in the biosynthesis of the cell wall peptidoglycan: transfers peptidoglycan precursor phospho-MurNAc-pentapeptide from UDP-MurNAc-pentapeptide onto the lipid carrier undecaprenyl phosphate, yielding undecaprenyl-pyrophosphoryl-MurNAc-pentapeptide, known as lipid I. In Campylobacter jejuni (strain RM1221), this protein is Phospho-N-acetylmuramoyl-pentapeptide-transferase.